Here is a 449-residue protein sequence, read N- to C-terminus: MSHITFDYSKVLESFAGQHEIDFLQGQVTEADKLLREGTGPGSDFLGWLDLPENYDKEEFARILTAAEKIKADSEVLVVIGIGGSYLGAKAAIDFLNHHFANLQTAKERKAPQILYAGNSISSTYLADLVEYVQDKEFSVNVISKSGTTTEPAIAFRVFKELLVKKYGQEEANKRIYATTDKVKGAVKLEADANNWETFVVPDNVGGRFSVLTAVGLLPIAASGADITALMEGANAARKDLSSDKISENIAYQYAAVRNVLYRKGYITEILANYEPSLQYFGEWWKQLAGESEGKDQKGIYPTSANFSTDLHSLGQFIQEGYRNLFETVIRVDNPRKNVIIPELAEDLDGLGYLQGKDVDFVNKKATDGVLLAHTDGGVPNMFVTLPAQDEFTLGYTIYFFELAIAVSGYMNAVNPFDQPGVEAYKRNMFALLGKPGFEALSAELNARL.

E291 (proton donor) is an active-site residue. Residues H312 and K426 contribute to the active site.

This sequence belongs to the GPI family.

It localises to the cytoplasm. The catalysed reaction is alpha-D-glucose 6-phosphate = beta-D-fructose 6-phosphate. It participates in carbohydrate biosynthesis; gluconeogenesis. It functions in the pathway carbohydrate degradation; glycolysis; D-glyceraldehyde 3-phosphate and glycerone phosphate from D-glucose: step 2/4. Catalyzes the reversible isomerization of glucose-6-phosphate to fructose-6-phosphate. The polypeptide is Glucose-6-phosphate isomerase (Streptococcus pyogenes serotype M28 (strain MGAS6180)).